Here is a 137-residue protein sequence, read N- to C-terminus: MKMDTDCRHWIVLASVPVLTVLAFKGEGALALAGLLVMAAVAMYRDRTEKKYSAARAPSPIAGHKTAYVTDPSAFAAGTVPVYPAPSNMGSDRFEGWVGGVLTGVGSSHLDHRKFAERQLVDRREKMVGYGWTKSFF.

A helical membrane pass occupies residues 20–42 (TVLAFKGEGALALAGLLVMAAVA).

Its subcellular location is the host membrane. This is an uncharacterized protein from Dryophytes versicolor (chameleon treefrog).